Consider the following 385-residue polypeptide: Flap endonuclease 1 (385 aa).

The N-domain stretch occupies residues 1 to 104 (MGILGLSKLI…GELAKRAERR (104 aa)). Residue D34 participates in Mg(2+) binding. DNA is bound by residues R47 and R70. Positions 86, 158, 160, 179, and 181 each coordinate Mg(2+). Residues 122 to 253 (GIEKFNRRLV…KRAIELINTY (132 aa)) form an I-domain region. Residue E158 participates in DNA binding. DNA is bound by residues G231 and D233. D233 serves as a coordination point for Mg(2+). The segment at 336–344 (TQVRLDSFF) is interaction with PCNA. The segment at 346–385 (TLPSTPNATNAAKRKAEEAKKSANNKKAKTSGGGRGRRPK) is disordered. A compositionally biased stretch (basic residues) spans 368-385 (ANNKKAKTSGGGRGRRPK).

Belongs to the XPG/RAD2 endonuclease family. FEN1 subfamily. Interacts with PCNA. Three molecules of FEN1 bind to one PCNA trimer with each molecule binding to one PCNA monomer. PCNA stimulates the nuclease activity without altering cleavage specificity. Requires Mg(2+) as cofactor. Post-translationally, phosphorylated. Phosphorylation upon DNA damage induces relocalization to the nuclear plasma.

It localises to the nucleus. It is found in the nucleolus. Its subcellular location is the nucleoplasm. The protein localises to the mitochondrion. Functionally, structure-specific nuclease with 5'-flap endonuclease and 5'-3' exonuclease activities involved in DNA replication and repair. During DNA replication, cleaves the 5'-overhanging flap structure that is generated by displacement synthesis when DNA polymerase encounters the 5'-end of a downstream Okazaki fragment. It enters the flap from the 5'-end and then tracks to cleave the flap base, leaving a nick for ligation. Also involved in the long patch base excision repair (LP-BER) pathway, by cleaving within the apurinic/apyrimidinic (AP) site-terminated flap. Acts as a genome stabilization factor that prevents flaps from equilibrating into structures that lead to duplications and deletions. Also possesses 5'-3' exonuclease activity on nicked or gapped double-stranded DNA, and exhibits RNase H activity. Also involved in replication and repair of rDNA and in repairing mitochondrial DNA. This chain is Flap endonuclease 1, found in Drosophila simulans (Fruit fly).